The chain runs to 100 residues: Glyceraldehyde-3-phosphate dehydrogenase, testis-specific (100 aa).

D39 and T64 together coordinate NAD(+). A D-glyceraldehyde 3-phosphate-binding site is contributed by R89.

It belongs to the glyceraldehyde-3-phosphate dehydrogenase family. In terms of assembly, homotetramer.

Its subcellular location is the cytoplasm. It carries out the reaction D-glyceraldehyde 3-phosphate + phosphate + NAD(+) = (2R)-3-phospho-glyceroyl phosphate + NADH + H(+). It participates in carbohydrate degradation; glycolysis; pyruvate from D-glyceraldehyde 3-phosphate: step 1/5. May play an important role in regulating the switch between different pathways for energy production during spermiogenesis and in the spermatozoon. Required for sperm motility and male fertility. The protein is Glyceraldehyde-3-phosphate dehydrogenase, testis-specific of Mesocricetus auratus (Golden hamster).